Consider the following 213-residue polypeptide: Protein-L-isoaspartate O-methyltransferase (213 aa).

The active site involves S64.

It belongs to the methyltransferase superfamily. L-isoaspartyl/D-aspartyl protein methyltransferase family.

It is found in the cytoplasm. The catalysed reaction is [protein]-L-isoaspartate + S-adenosyl-L-methionine = [protein]-L-isoaspartate alpha-methyl ester + S-adenosyl-L-homocysteine. In terms of biological role, catalyzes the methyl esterification of L-isoaspartyl residues in peptides and proteins that result from spontaneous decomposition of normal L-aspartyl and L-asparaginyl residues. It plays a role in the repair and/or degradation of damaged proteins. In Flavobacterium psychrophilum (strain ATCC 49511 / DSM 21280 / CIP 103535 / JIP02/86), this protein is Protein-L-isoaspartate O-methyltransferase.